We begin with the raw amino-acid sequence, 121 residues long: Flagellar protein FliT (121 aa).

Residues 1-50 (MNNAPHLYFAWQQLVEKSQLMLRLATEEQWDELIASEMAYVNAVQEIAHL) are required for homodimerization. The fliD binding stretch occupies residues 60-98 (MQEQLRPMLLLILDNESKVKQLLQIRMDELAKLVGQSSV).

The protein belongs to the FliT family. In terms of assembly, homodimer. Interacts with FliD and FlhC.

The protein resides in the cytoplasm. It localises to the cytosol. In terms of biological role, dual-function protein that regulates the transcription of class 2 flagellar operons and that also acts as an export chaperone for the filament-capping protein FliD. As a transcriptional regulator, acts as an anti-FlhDC factor; it directly binds FlhC, thus inhibiting the binding of the FlhC/FlhD complex to class 2 promoters, resulting in decreased expression of class 2 flagellar operons. As a chaperone, effects FliD transition to the membrane by preventing its premature polymerization, and by directing it to the export apparatus. The protein is Flagellar protein FliT of Escherichia coli O6:K15:H31 (strain 536 / UPEC).